The sequence spans 558 residues: PE cleavage protein A (558 aa).

Residues 1-93 form the PE domain; that stretch reads MSFLVVVPEF…SGSYAAAEAT (93 aa). Residue Asp-297 is part of the active site.

The protein belongs to the mycobacterial PE family. PGRS subfamily. Post-translationally, undergoes auto-proteolytic processing.

It localises to the secreted. The protein localises to the cell surface. In terms of biological role, aspartic protease that processes the lipase LipY and other PE_PGRS proteins. Can also cleave itself. In Mycobacterium tuberculosis (strain CDC 1551 / Oshkosh), this protein is PE cleavage protein A.